Consider the following 159-residue polypeptide: Phosphopantetheine adenylyltransferase (159 aa).

Position 10 (Thr10) interacts with substrate. Residues 10–11 and His18 each bind ATP; that span reads TF. The substrate site is built by Lys42, Met74, and Arg88. ATP is bound by residues 89–91, Glu99, and 124–130; these read GLR and WSFISSS.

It belongs to the bacterial CoaD family. Homohexamer. Mg(2+) is required as a cofactor.

The protein localises to the cytoplasm. It carries out the reaction (R)-4'-phosphopantetheine + ATP + H(+) = 3'-dephospho-CoA + diphosphate. It participates in cofactor biosynthesis; coenzyme A biosynthesis; CoA from (R)-pantothenate: step 4/5. Reversibly transfers an adenylyl group from ATP to 4'-phosphopantetheine, yielding dephospho-CoA (dPCoA) and pyrophosphate. The protein is Phosphopantetheine adenylyltransferase of Yersinia pseudotuberculosis serotype I (strain IP32953).